Consider the following 284-residue polypeptide: D-tagatose-1,6-bisphosphate aldolase subunit GatY (284 aa).

D82 acts as the Proton donor in catalysis. The Zn(2+) site is built by H83 and H180. Position 181 (G181) interacts with dihydroxyacetone phosphate. A Zn(2+)-binding site is contributed by H208. Dihydroxyacetone phosphate contacts are provided by residues 209-211 (GAS) and 230-233 (NVAT).

Belongs to the class II fructose-bisphosphate aldolase family. TagBP aldolase GatY subfamily. As to quaternary structure, forms a complex with GatZ. Zn(2+) is required as a cofactor.

It carries out the reaction D-tagatofuranose 1,6-bisphosphate = D-glyceraldehyde 3-phosphate + dihydroxyacetone phosphate. Its pathway is carbohydrate metabolism; D-tagatose 6-phosphate degradation; D-glyceraldehyde 3-phosphate and glycerone phosphate from D-tagatose 6-phosphate: step 2/2. Functionally, catalytic subunit of the tagatose-1,6-bisphosphate aldolase GatYZ, which catalyzes the reversible aldol condensation of dihydroxyacetone phosphate (DHAP or glycerone-phosphate) with glyceraldehyde 3-phosphate (G3P) to produce tagatose 1,6-bisphosphate (TBP). Requires GatZ subunit for full activity and stability. Is involved in the catabolism of galactitol. This is D-tagatose-1,6-bisphosphate aldolase subunit GatY from Escherichia coli (strain SMS-3-5 / SECEC).